A 314-amino-acid polypeptide reads, in one-letter code: 4-hydroxy-3-methylbut-2-enyl diphosphate reductase (314 aa).

Cys-12 provides a ligand contact to [4Fe-4S] cluster. Residues His-41 and His-74 each coordinate (2E)-4-hydroxy-3-methylbut-2-enyl diphosphate. Dimethylallyl diphosphate is bound by residues His-41 and His-74. Positions 41 and 74 each coordinate isopentenyl diphosphate. Cys-96 provides a ligand contact to [4Fe-4S] cluster. His-124 contributes to the (2E)-4-hydroxy-3-methylbut-2-enyl diphosphate binding site. A dimethylallyl diphosphate-binding site is contributed by His-124. His-124 is a binding site for isopentenyl diphosphate. The active-site Proton donor is the Glu-126. Thr-167 serves as a coordination point for (2E)-4-hydroxy-3-methylbut-2-enyl diphosphate. Position 197 (Cys-197) interacts with [4Fe-4S] cluster. Ser-225, Ser-226, Asn-227, and Ser-269 together coordinate (2E)-4-hydroxy-3-methylbut-2-enyl diphosphate. Residues Ser-225, Ser-226, Asn-227, and Ser-269 each coordinate dimethylallyl diphosphate. Isopentenyl diphosphate contacts are provided by Ser-225, Ser-226, Asn-227, and Ser-269.

The protein belongs to the IspH family. [4Fe-4S] cluster serves as cofactor.

The catalysed reaction is isopentenyl diphosphate + 2 oxidized [2Fe-2S]-[ferredoxin] + H2O = (2E)-4-hydroxy-3-methylbut-2-enyl diphosphate + 2 reduced [2Fe-2S]-[ferredoxin] + 2 H(+). It catalyses the reaction dimethylallyl diphosphate + 2 oxidized [2Fe-2S]-[ferredoxin] + H2O = (2E)-4-hydroxy-3-methylbut-2-enyl diphosphate + 2 reduced [2Fe-2S]-[ferredoxin] + 2 H(+). It participates in isoprenoid biosynthesis; dimethylallyl diphosphate biosynthesis; dimethylallyl diphosphate from (2E)-4-hydroxy-3-methylbutenyl diphosphate: step 1/1. The protein operates within isoprenoid biosynthesis; isopentenyl diphosphate biosynthesis via DXP pathway; isopentenyl diphosphate from 1-deoxy-D-xylulose 5-phosphate: step 6/6. In terms of biological role, catalyzes the conversion of 1-hydroxy-2-methyl-2-(E)-butenyl 4-diphosphate (HMBPP) into a mixture of isopentenyl diphosphate (IPP) and dimethylallyl diphosphate (DMAPP). Acts in the terminal step of the DOXP/MEP pathway for isoprenoid precursor biosynthesis. This Aliivibrio salmonicida (strain LFI1238) (Vibrio salmonicida (strain LFI1238)) protein is 4-hydroxy-3-methylbut-2-enyl diphosphate reductase.